Reading from the N-terminus, the 129-residue chain is Large ribosomal subunit protein uL22 (129 aa).

It belongs to the universal ribosomal protein uL22 family. Part of the 50S ribosomal subunit.

Functionally, this protein binds specifically to 23S rRNA; its binding is stimulated by other ribosomal proteins, e.g. L4, L17, and L20. It is important during the early stages of 50S assembly. It makes multiple contacts with different domains of the 23S rRNA in the assembled 50S subunit and ribosome. Its function is as follows. The globular domain of the protein is located near the polypeptide exit tunnel on the outside of the subunit, while an extended beta-hairpin is found that lines the wall of the exit tunnel in the center of the 70S ribosome. The sequence is that of Large ribosomal subunit protein uL22 from Rhizobium meliloti (strain 1021) (Ensifer meliloti).